A 334-amino-acid polypeptide reads, in one-letter code: MKQAVYVASPDSQQIHVWQLDSAGELTLLQTVDVPGQVQPMAISPNQRHLYVGVRPDFGIVSYHIADDGTLTAAGMAPLPGSPTHIDTDRQGRFLFSASYSFNCVSISPIDTHGVVQAPIQQLDDLPAPHSANIDPTNQILLVPCLKEDKVRLFDLSAEGQLTPHAQADITVAAGAGPRHMAFHPNHQVAYCVNELNSSVDVYQISNNGQEYHLVQSLDAMPADFTGTRWAADIHITPNGRYLYISDRTANLLGIFTVSEDGRVISLVGHHLTEAQPRGFNIDHSGNFLIASGQKSDHIEVYRIDQNTGELTTLKRYPVGKGPMWVSIRGAQNS.

It belongs to the cycloisomerase 2 family.

It carries out the reaction 6-phospho-D-glucono-1,5-lactone + H2O = 6-phospho-D-gluconate + H(+). Its pathway is carbohydrate degradation; pentose phosphate pathway; D-ribulose 5-phosphate from D-glucose 6-phosphate (oxidative stage): step 2/3. Functionally, catalyzes the hydrolysis of 6-phosphogluconolactone to 6-phosphogluconate. In Yersinia pseudotuberculosis serotype O:1b (strain IP 31758), this protein is 6-phosphogluconolactonase.